A 101-amino-acid polypeptide reads, in one-letter code: NAD(P)H-quinone oxidoreductase subunit 4L, chloroplastic (101 aa).

3 consecutive transmembrane segments (helical) span residues 2–22 (MLEH…YGLI), 32–52 (MCLE…SDFF), and 61–81 (IFSI…LAIV).

This sequence belongs to the complex I subunit 4L family. As to quaternary structure, NDH is composed of at least 16 different subunits, 5 of which are encoded in the nucleus.

The protein localises to the plastid. It localises to the chloroplast thylakoid membrane. The enzyme catalyses a plastoquinone + NADH + (n+1) H(+)(in) = a plastoquinol + NAD(+) + n H(+)(out). It catalyses the reaction a plastoquinone + NADPH + (n+1) H(+)(in) = a plastoquinol + NADP(+) + n H(+)(out). NDH shuttles electrons from NAD(P)H:plastoquinone, via FMN and iron-sulfur (Fe-S) centers, to quinones in the photosynthetic chain and possibly in a chloroplast respiratory chain. The immediate electron acceptor for the enzyme in this species is believed to be plastoquinone. Couples the redox reaction to proton translocation, and thus conserves the redox energy in a proton gradient. This Panax ginseng (Korean ginseng) protein is NAD(P)H-quinone oxidoreductase subunit 4L, chloroplastic.